A 506-amino-acid chain; its full sequence is MSQADADITPFFADDNEGEGPVENGVGSPLPEDEEEESPSGVTDRRAIMTVIVLCYINLLNYMDRFTVAGVLPDIEHFFGIGDGTSGLLQTVFICSYMFLAPLFGYLGDRYNRKLIMCVGIFFWSVVTLASSFIGKDHFWALLLTRGLVGVGEASYSTIAPTIIADLFVKEKRTNMLSIFYFAIPVGSGMGYIVGSKVDTVAKDWHWALRVTPGLGLLAVFLLMLVVQEPKRGAIEAHPEHTLHRTSWLADMKALCRNPSFILSTFGFTAVAFVTGSLALWAPAFLFRAGVFTGVKQPCFKAPCDDSDSLIFGAITVVTGILGVASGVQASKLLRTRTPRADPLVCAAGLLLAAPFLYLSIMFAQASTVATYVFIFLGETFLSMNWAIVADILLYVVIPTRRSTAEAFQIVLSHLLGDAISPYLIGVVSDSIKESNSYMWEFRSLQMSLLLCSFVAVAGGAFFLATAVFIEKDRDLAENYVPSDDAPIVVPRSGRSTKVSVSSVLI.

Residues 1–42 (MSQADADITPFFADDNEGEGPVENGVGSPLPEDEEEESPSGV) are disordered. The segment covering 21-30 (PVENGVGSPL) has biased composition (low complexity). Transmembrane regions (helical) follow at residues 52-71 (IVLC…VAGV), 87-107 (GLLQ…FGYL), 115-135 (LIMC…SFIG), 149-169 (VGVG…DLFV), 176-196 (MLSI…IVGS), 207-227 (WALR…MLVV), 266-286 (FGFT…PAFL), 310-330 (LIFG…GVQA), 344-364 (LVCA…IMFA), 373-393 (VFIF…ADIL), 408-428 (FQIV…IGVV), and 450-470 (LLCS…AVFI).

It belongs to the major facilitator superfamily. Spinster (TC 2.A.1.49) family. As to expression, expressed in yolk cells.

The protein resides in the lysosome membrane. It carries out the reaction a 1-acyl-sn-glycero-3-phosphocholine(out) + H(+)(out) = a 1-acyl-sn-glycero-3-phosphocholine(in) + H(+)(in). It catalyses the reaction a 1-acyl-sn-glycero-3-phosphoethanolamine(out) + H(+)(out) = a 1-acyl-sn-glycero-3-phosphoethanolamine(in) + H(+)(in). The enzyme catalyses a 1-O-(1Z-alkenyl)-sn-glycero-3-phosphocholine(out) + H(+)(out) = a 1-O-(1Z-alkenyl)-sn-glycero-3-phosphocholine(in) + H(+)(in). The catalysed reaction is a 1-O-(1Z-alkenyl)-sn-glycero-3-phosphoethanolamine(out) + H(+)(out) = a 1-O-(1Z-alkenyl)-sn-glycero-3-phosphoethanolamine(in) + H(+)(in). Its function is as follows. Mediates the rate-limiting, proton-dependent, lysosomal efflux of lysophospholipids. Selective for zwitterionic headgroups such as lysophosphatidylcholine (LPC) and lysophosphatidylethanolamine (LPE). Essential player in lysosomal homeostasis. Critical for embryogenesis. Involved in the regulation of developmental senescence. In Danio rerio (Zebrafish), this protein is Protein spinster homolog 1 (spns1).